Reading from the N-terminus, the 440-residue chain is Proline--tRNA ligase (440 aa).

Belongs to the class-II aminoacyl-tRNA synthetase family. ProS type 2 subfamily. In terms of assembly, homodimer.

The protein resides in the cytoplasm. It carries out the reaction tRNA(Pro) + L-proline + ATP = L-prolyl-tRNA(Pro) + AMP + diphosphate. Catalyzes the attachment of proline to tRNA(Pro) in a two-step reaction: proline is first activated by ATP to form Pro-AMP and then transferred to the acceptor end of tRNA(Pro). The chain is Proline--tRNA ligase from Rhizobium leguminosarum bv. trifolii (strain WSM2304).